The following is a 154-amino-acid chain: Protein X (154 aa).

Residues 68–117 (PCALRFTSARSMETTVNAHQVLPKVLHKRTLGLSAMSTTDLEAYFKDCLF) are mitochondrial targeting sequence.

Belongs to the orthohepadnavirus protein X family. As to quaternary structure, may form homodimer. May interact with host CEBPA, CFLAR, CREB1, DDB1, E4F1, HBXIP, HSPD1/HSP60, NFKBIA, POLR2E and SMAD4. Interacts with host SMC5-SMC6 complex and induces its degradation. Interacts with host TRPC4AP; leading to prevent ubiquitination of TRPC4AP. Interacts with host PLSCR1; this interaction promotes ubiquitination and degradation of HBx and impairs HBx-mediated cell proliferation. Post-translationally, a fraction may be phosphorylated in insect cells and HepG2 cells, a human hepatoblastoma cell line. Phosphorylated in vitro by host protein kinase C or mitogen-activated protein kinase. N-acetylated in insect cells.

Its subcellular location is the host cytoplasm. It localises to the host nucleus. The protein localises to the host mitochondrion. Its function is as follows. Multifunctional protein that plays a role in silencing host antiviral defenses and promoting viral transcription. Does not seem to be essential for HBV infection. May be directly involved in development of cirrhosis and liver cancer (hepatocellular carcinoma). Most of cytosolic activities involve modulation of cytosolic calcium. The effect on apoptosis is controversial depending on the cell types in which the studies have been conducted. May induce apoptosis by localizing in mitochondria and causing loss of mitochondrial membrane potential. May also modulate apoptosis by binding host CFLAR, a key regulator of the death-inducing signaling complex (DISC). Promotes viral transcription by using the host E3 ubiquitin ligase DDB1 to target the SMC5-SMC6 complex to proteasomal degradation. This host complex would otherwise bind to viral episomal DNA, and prevents its transcription. Moderately stimulates transcription of many different viral and cellular transcription elements. Promoters and enhancers stimulated by HBx contain DNA binding sites for NF-kappa-B, AP-1, AP-2, c-EBP, ATF/CREB, or the calcium-activated factor NF-AT. The chain is Protein X from Homo sapiens (Human).